We begin with the raw amino-acid sequence, 159 residues long: Nucleoside diphosphate kinase (159 aa).

Residues Lys-13, Phe-61, Arg-89, Thr-95, Arg-106, and Asn-116 each contribute to the ATP site. His-119 functions as the Pros-phosphohistidine intermediate in the catalytic mechanism.

The protein belongs to the NDK family. Mg(2+) serves as cofactor.

Its subcellular location is the cytoplasm. It carries out the reaction a 2'-deoxyribonucleoside 5'-diphosphate + ATP = a 2'-deoxyribonucleoside 5'-triphosphate + ADP. The catalysed reaction is a ribonucleoside 5'-diphosphate + ATP = a ribonucleoside 5'-triphosphate + ADP. Functionally, major role in the synthesis of nucleoside triphosphates other than ATP. The ATP gamma phosphate is transferred to the NDP beta phosphate via a ping-pong mechanism, using a phosphorylated active-site intermediate. The polypeptide is Nucleoside diphosphate kinase (Halorubrum lacusprofundi (strain ATCC 49239 / DSM 5036 / JCM 8891 / ACAM 34)).